We begin with the raw amino-acid sequence, 517 residues long: MKLAPDLLQATFEQTFSILQQARRSFSPQLQPREIGTITSIATGIAKVSGLPGVGFEEILKFPSDIFGIAFNVDEDEIGAVLLGDYWHLQAGDEVERCGHLVDVPVGEGLLGRIINPIGEPLDGKGRLIASARLPIERPSPAIMNRAPVSVPLQTGIKVIDALIPVGLGQRELILGDRQTGKTAIAVDTILNQRDKNVLCVYCAIGQRASGVAKVIATLHEQGALEYTVVVVTEGNDPPGLAYIAPYAATSIAEYFMQQGRNVLIVYDDLTHHARAYRELSLLLRRPPGREAFPGDIFYIHSRLLERATHLSPNLGGGSLTALPIIETEAQDISAYIPTNLISITDGQIYLSPSLFELGVLPAIDVGKSVSRVGGKAQRAAYRAVASNLKLAYAQFEELETFASFGARLDDSTLKTIDHGRRIRACLKQAESTPISMIEQIAVLLALTANLFDEVPLDVMSQAEHAVRAATADIPVEITARLASTEKLTDEDRDGILQPVRDALAPFMHSQKRKEIT.

176–183 contributes to the ATP binding site; it reads GDRQTGKT.

It belongs to the ATPase alpha/beta chains family. F-type ATPases have 2 components, CF(1) - the catalytic core - and CF(0) - the membrane proton channel. CF(1) has five subunits: alpha(3), beta(3), gamma(1), delta(1), epsilon(1). CF(0) has three main subunits: a(1), b(2) and c(9-12). The alpha and beta chains form an alternating ring which encloses part of the gamma chain. CF(1) is attached to CF(0) by a central stalk formed by the gamma and epsilon chains, while a peripheral stalk is formed by the delta and b chains.

It is found in the cell inner membrane. The enzyme catalyses ATP + H2O + 4 H(+)(in) = ADP + phosphate + 5 H(+)(out). Functionally, produces ATP from ADP in the presence of a proton gradient across the membrane. The alpha chain is a regulatory subunit. This chain is ATP synthase subunit alpha 1, found in Shewanella frigidimarina (strain NCIMB 400).